A 205-amino-acid polypeptide reads, in one-letter code: MEGIVNSGLFNWLILPLLIFFSRIIDVTIGTIRIIFVSRGKKYLAPVLGFFEVLVWIMAISQIMQNLNNFVCYFAYAAGFATGTFVGIIIEEKLAIGTLVIRVIVDKNECELKERLSKSGFGVTVVDAKGKNGDVKIIYTIIKRKELQEVVRIIEECNSKAFYSIEDARKVNQGIFRTGTSNHDGTRFFNLFRIHRMSGLDKKTR.

3 helical membrane-spanning segments follow: residues 15–37, 44–64, and 70–90; these read LPLL…IIFV, LAPV…SQIM, and FVCY…GIII.

The protein belongs to the UPF0316 family.

Its subcellular location is the cell membrane. The protein is UPF0316 protein Cthe_2213 of Acetivibrio thermocellus (strain ATCC 27405 / DSM 1237 / JCM 9322 / NBRC 103400 / NCIMB 10682 / NRRL B-4536 / VPI 7372) (Clostridium thermocellum).